A 276-amino-acid chain; its full sequence is NH(3)-dependent NAD(+) synthetase (276 aa).

43-50 is an ATP binding site; that stretch reads GISGGVDS. D49 serves as a coordination point for Mg(2+). Position 146 (R146) interacts with deamido-NAD(+). T166 contacts ATP. E171 contacts Mg(2+). Deamido-NAD(+) contacts are provided by K179 and D186. 2 residues coordinate ATP: K195 and T217. Residue 266 to 267 participates in deamido-NAD(+) binding; it reads HK.

This sequence belongs to the NAD synthetase family. As to quaternary structure, homodimer.

The enzyme catalyses deamido-NAD(+) + NH4(+) + ATP = AMP + diphosphate + NAD(+) + H(+). It functions in the pathway cofactor biosynthesis; NAD(+) biosynthesis; NAD(+) from deamido-NAD(+) (ammonia route): step 1/1. In terms of biological role, catalyzes the ATP-dependent amidation of deamido-NAD to form NAD. Uses ammonia as a nitrogen source. The chain is NH(3)-dependent NAD(+) synthetase from Vibrio campbellii (strain ATCC BAA-1116).